We begin with the raw amino-acid sequence, 345 residues long: D-amino-acid oxidase (345 aa).

FAD-binding residues include serine 10, isoleucine 13, serine 49, glycine 53, and asparagine 55. Residues tyrosine 230 and arginine 290 each contribute to the (R)-lactate site. Residues tyrosine 230 and arginine 290 each coordinate anthranilate. FAD contacts are provided by arginine 290, serine 317, glycine 320, tyrosine 321, and glutamine 322. Positions 343 to 345 (AKL) match the Microbody targeting signal motif.

The protein belongs to the DAMOX/DASOX family. The cofactor is FAD.

The protein localises to the peroxisome matrix. The enzyme catalyses a D-alpha-amino acid + O2 + H2O = a 2-oxocarboxylate + H2O2 + NH4(+). The catalysed reaction is D-methionine + O2 + H2O = 4-methylsulfanyl-2-oxobutanoate + H2O2 + NH4(+). Catalyzes the oxidative deamination of D-amino acids with broad substrate specificity. Enables the organism to utilize D-amino acids as a source of nutrients. Enables the organism to utilize D-alanine as a nitrogen source, although it is not strictly required for this process. Also enables utilization of D-alanine as a carbon source. The protein is D-amino-acid oxidase of Candida boidinii (Yeast).